The sequence spans 150 residues: 3-dehydroquinate dehydratase (150 aa).

The Proton acceptor role is filled by Tyr26. Substrate is bound by residues Asn77, His83, and Asp90. His103 serves as the catalytic Proton donor. Residues 104 to 105 (LS) and Arg114 contribute to the substrate site.

It belongs to the type-II 3-dehydroquinase family. As to quaternary structure, homododecamer.

It carries out the reaction 3-dehydroquinate = 3-dehydroshikimate + H2O. The protein operates within metabolic intermediate biosynthesis; chorismate biosynthesis; chorismate from D-erythrose 4-phosphate and phosphoenolpyruvate: step 3/7. Its function is as follows. Catalyzes a trans-dehydration via an enolate intermediate. This is 3-dehydroquinate dehydratase from Histophilus somni (strain 129Pt) (Haemophilus somnus).